We begin with the raw amino-acid sequence, 114 residues long: Kita-kyushu lung cancer antigen 1 homolog (114 aa).

Residues methionine 1 to tyrosine 4 lie on the Cytoplasmic side of the membrane. The chain crosses the membrane as a helical; Signal-anchor for type II membrane protein span at residues leucine 5–tyrosine 22. Over arginine 23–threonine 114 the chain is Extracellular. Asparagine 84 carries N-linked (GlcNAc...) asparagine glycosylation.

Its subcellular location is the cell membrane. The protein is Kita-kyushu lung cancer antigen 1 homolog (CT83) of Macaca fascicularis (Crab-eating macaque).